The following is a 64-amino-acid chain: Large ribosomal subunit protein bL35 (64 aa).

Positions 1 to 14 are enriched in basic residues; the sequence is MKQKTHKGTAKRIK. Positions 1–48 are disordered; the sequence is MKQKTHKGTAKRIKVTGSGKLRREQANRRHLLEGKPSKRTRRLKGTED. The segment covering 21 to 36 has biased composition (basic and acidic residues); sequence LRREQANRRHLLEGKP.

It belongs to the bacterial ribosomal protein bL35 family.

The sequence is that of Large ribosomal subunit protein bL35 from Corynebacterium aurimucosum (strain ATCC 700975 / DSM 44827 / CIP 107346 / CN-1) (Corynebacterium nigricans).